A 360-amino-acid polypeptide reads, in one-letter code: Photosystem II protein D1 2 (360 aa).

The next 3 membrane-spanning stretches (helical) occupy residues Tyr-29–Thr-46, His-118–Leu-133, and Trp-142–Ala-156. His-118 is a chlorophyll a binding site. Tyr-126 provides a ligand contact to pheophytin a. Positions 170 and 189 each coordinate [CaMn4O5] cluster. Residues Phe-197–Leu-218 traverse the membrane as a helical segment. His-198 is a binding site for chlorophyll a. A quinone contacts are provided by residues His-215 and Ser-264 to Phe-265. Position 215 (His-215) interacts with Fe cation. A Fe cation-binding site is contributed by His-272. Residues Phe-274–Leu-288 form a helical membrane-spanning segment. [CaMn4O5] cluster contacts are provided by His-332, Glu-333, Asp-342, and Ala-344. Residues Ala-345 to Gly-360 constitute a propeptide that is removed on maturation.

This sequence belongs to the reaction center PufL/M/PsbA/D family. PSII is composed of 1 copy each of membrane proteins PsbA, PsbB, PsbC, PsbD, PsbE, PsbF, PsbH, PsbI, PsbJ, PsbK, PsbL, PsbM, PsbT, PsbX, PsbY, PsbZ, Psb30/Ycf12, peripheral proteins PsbO, CyanoQ (PsbQ), PsbU, PsbV and a large number of cofactors. It forms dimeric complexes. It depends on The D1/D2 heterodimer binds P680, chlorophylls that are the primary electron donor of PSII, and subsequent electron acceptors. It shares a non-heme iron and each subunit binds pheophytin, quinone, additional chlorophylls, carotenoids and lipids. D1 provides most of the ligands for the Mn4-Ca-O5 cluster of the oxygen-evolving complex (OEC). There is also a Cl(-1) ion associated with D1 and D2, which is required for oxygen evolution. The PSII complex binds additional chlorophylls, carotenoids and specific lipids. as a cofactor. In terms of processing, tyr-161 forms a radical intermediate that is referred to as redox-active TyrZ, YZ or Y-Z. Post-translationally, C-terminally processed by CtpA; processing is essential to allow assembly of the oxygen-evolving complex and thus photosynthetic growth.

Its subcellular location is the cellular thylakoid membrane. The catalysed reaction is 2 a plastoquinone + 4 hnu + 2 H2O = 2 a plastoquinol + O2. Its function is as follows. Photosystem II (PSII) is a light-driven water:plastoquinone oxidoreductase that uses light energy to abstract electrons from H(2)O, generating O(2) and a proton gradient subsequently used for ATP formation. It consists of a core antenna complex that captures photons, and an electron transfer chain that converts photonic excitation into a charge separation. The D1/D2 (PsbA/PsbD) reaction center heterodimer binds P680, the primary electron donor of PSII as well as several subsequent electron acceptors. In Picosynechococcus sp. (strain ATCC 27264 / PCC 7002 / PR-6) (Agmenellum quadruplicatum), this protein is Photosystem II protein D1 2.